The following is a 331-amino-acid chain: Probable cytosolic iron-sulfur protein assembly protein Ciao1 (331 aa).

7 WD repeats span residues Gly-12 to Lys-51, Gly-57 to Glu-96, Gly-97 to Cys-136, Ala-142 to Asp-181, Ser-188 to Gly-227, Gln-246 to Glu-285, and Ala-297 to Glu-331.

The protein belongs to the WD repeat CIA1 family.

Functionally, essential component of the cytosolic iron-sulfur (Fe/S) protein assembly machinery. Required for the maturation of extramitochondrial Fe/S proteins. The chain is Probable cytosolic iron-sulfur protein assembly protein Ciao1 from Drosophila grimshawi (Hawaiian fruit fly).